A 236-amino-acid polypeptide reads, in one-letter code: MATTEKTKALVLFSGGQDSTVCLASVLARYDEVETVGFDYGQAHAVELGCRAKLRDALTRFPGWGAKLGPDHMIALPELGRISETALTRDVEIEMGENGLPTTFVPGRNLLFFTYAAALGYRRGASVIVGGMCETDYSGYPDCRADTIAALERAICLGMDRAFTLETPLMRIDKAATWALAHELGGDALVDLIIEETHSCYRGDRSKRHDWGYGCGTCPACELRARGYTAYLAGKA.

13 to 23 (FSGGQDSTVCL) lines the ATP pocket. The Zn(2+) site is built by C200, C215, C218, and C221.

Belongs to the QueC family. The cofactor is Zn(2+).

The enzyme catalyses 7-carboxy-7-deazaguanine + NH4(+) + ATP = 7-cyano-7-deazaguanine + ADP + phosphate + H2O + H(+). It participates in purine metabolism; 7-cyano-7-deazaguanine biosynthesis. In terms of biological role, catalyzes the ATP-dependent conversion of 7-carboxy-7-deazaguanine (CDG) to 7-cyano-7-deazaguanine (preQ(0)). This Parvibaculum lavamentivorans (strain DS-1 / DSM 13023 / NCIMB 13966) protein is 7-cyano-7-deazaguanine synthase.